The primary structure comprises 321 residues: Transmembrane protein 255A (321 aa).

Helical transmembrane passes span 29–49, 56–76, 88–108, and 200–220; these read VFVT…GMAA, VTVG…LGII, LVAS…CAIV, and TILN…LGGF. The span at 279–297 shows a compositional bias: polar residues; the sequence is STPSGLSDDPNGQASSFMW. The interval 279-300 is disordered; the sequence is STPSGLSDDPNGQASSFMWPSN.

The protein belongs to the TMEM255 family.

The protein localises to the membrane. In Xenopus laevis (African clawed frog), this protein is Transmembrane protein 255A (tmem255a).